The following is a 374-amino-acid chain: MVNEEEKDLTAEGDSNNTGVSPDSIKNKTLDFYPKEKTTERKTRSRERISRKEVNLRFKAYLKSRLFRDYAYIIFAAFLGMASYDYFIAATTSNGITPSGIGGVARGIAVGIWPNQDQLQMQTSMYWVFYFVFNIPLFIFGVIKIGIRFSFRTIVYIGLQNGFHFAFAYIPVINPQELFFIVNYNSLNIFSNYGGMYQIWLFVFAAVAGILNGIAYGLVYKGGASTAGTDFVFAYYSAKKKISIANYNRIVNYIIIVVMLAIHTTLLSRSELTSIYFGKYWAANIEQIQRLGFKIDDGGLYDSDFTSHKIKYFFGPALFASYLFVVVQAITIDIIFPKFKYRSLMVITSKADAVVSGLQYVHYPNDIIRLPARD.

Positions 1–46 (MVNEEEKDLTAEGDSNNTGVSPDSIKNKTLDFYPKEKTTERKTRSR) are disordered. A compositionally biased stretch (basic and acidic residues) spans 25–46 (IKNKTLDFYPKEKTTERKTRSR). The next 6 helical transmembrane spans lie at 70-90 (YAYI…FIAA), 127-147 (WVFY…KIGI), 153-173 (TIVY…IPVI), 199-219 (IWLF…YGLV), 242-262 (ISIA…MLAI), and 312-332 (YFFG…AITI).

It to M.genitalium MG432 and MG443.

It localises to the cell membrane. This is an uncharacterized protein from Spiroplasma citri.